Here is a 350-residue protein sequence, read N- to C-terminus: Phosphotriesterase-related protein (350 aa).

A divalent metal cation-binding residues include His24, His26, Glu170, His202, His231, and Asp299.

This sequence belongs to the metallo-dependent hydrolases superfamily. Phosphotriesterase family. Requires a divalent metal cation as cofactor.

This Nematostella vectensis (Starlet sea anemone) protein is Phosphotriesterase-related protein.